A 501-amino-acid chain; its full sequence is Acetylcholine receptor subunit beta (501 aa).

The signal sequence occupies residues 1–23; it reads MALGALLLILGILGTPLAPGARG. At 24–244 the chain is on the extracellular side; sequence SEAEGQLLKK…VIFYLIIRRK (221 aa). A disulfide bridge links cysteine 151 with cysteine 165. Asparagine 164 is a glycosylation site (N-linked (GlcNAc...) asparagine). The next 3 helical transmembrane spans lie at 245 to 269, 277 to 295, and 311 to 332; these read PLFY…VFYL, MGLS…LLLA, and YLMF…VLNL. Residues 333–469 lie on the Cytoplasmic side of the membrane; it reads HHRSPHTHQM…WQFVAMVVDR (137 aa). Residues 362 to 381 are disordered; sequence RPKPERDQLPEPHHSFSPRS. Basic and acidic residues predominate over residues 363 to 375; that stretch reads PKPERDQLPEPHH. A Phosphotyrosine; by Tyr-kinases modification is found at tyrosine 390. A helical membrane pass occupies residues 470-488; the sequence is LFLWTFIVFTSVGTLVIFL.

It belongs to the ligand-gated ion channel (TC 1.A.9) family. Acetylcholine receptor (TC 1.A.9.1) subfamily. Beta-1/CHRNB1 sub-subfamily. Pentamer of two alpha chains, and one each of the beta, delta, and gamma (in immature muscle) or epsilon (in mature muscle) chains. The muscle heteropentamer composed of alpha-1, beta-1, delta, epsilon subunits interacts with the alpha-conotoxin ImII.

Its subcellular location is the postsynaptic cell membrane. It is found in the cell membrane. The catalysed reaction is K(+)(in) = K(+)(out). The enzyme catalyses Na(+)(in) = Na(+)(out). Its function is as follows. After binding acetylcholine, the AChR responds by an extensive change in conformation that affects all subunits and leads to opening of an ion-conducting channel across the plasma membrane. The chain is Acetylcholine receptor subunit beta (Chrnb1) from Rattus norvegicus (Rat).